Reading from the N-terminus, the 218-residue chain is Protein-methionine-sulfoxide reductase heme-binding subunit MsrQ (218 aa).

The next 5 helical transmembrane spans lie at 12–32 (TLIKSMLFIAALLPFGRLALF), 82–102 (MLGLFAFFYACLHFTTFLWFD), 118–138 (PFITVGFSAFVLLIPLAITST), 150–170 (WQWLHRLVYVIAALGILHYWW), and 180–200 (QPIIFGTIVAVLLLVRVFWAW).

Belongs to the MsrQ family. As to quaternary structure, heterodimer of a catalytic subunit (MsrP) and a heme-binding subunit (MsrQ). The cofactor is FMN. Heme b serves as cofactor.

Its subcellular location is the cell inner membrane. In terms of biological role, part of the MsrPQ system that repairs oxidized periplasmic proteins containing methionine sulfoxide residues (Met-O), using respiratory chain electrons. Thus protects these proteins from oxidative-stress damage caused by reactive species of oxygen and chlorine generated by the host defense mechanisms. MsrPQ is essential for the maintenance of envelope integrity under bleach stress, rescuing a wide series of structurally unrelated periplasmic proteins from methionine oxidation. MsrQ provides electrons for reduction to the reductase catalytic subunit MsrP, using the quinone pool of the respiratory chain. The sequence is that of Protein-methionine-sulfoxide reductase heme-binding subunit MsrQ from Herminiimonas arsenicoxydans.